We begin with the raw amino-acid sequence, 214 residues long: Adenylate kinase (214 aa).

10–15 (GVGKGT) contributes to the ATP binding site. Residues 30-59 (STGDILRAAVKELTPMGAKAKGYMDSGALV) are NMP. AMP is bound by residues T31, R36, 57–59 (ALV), 85–88 (GFPR), and Q92. An LID region spans residues 126–163 (GRRACANCGAGYHVDFAPSKVAGVCDACSGQLVQREDD). ATP is bound at residue R127. Zn(2+)-binding residues include C130, C133, C150, and C153. R160 and R171 together coordinate AMP. Position 199 (G199) interacts with ATP.

The protein belongs to the adenylate kinase family. In terms of assembly, monomer.

It is found in the cytoplasm. It carries out the reaction AMP + ATP = 2 ADP. It participates in purine metabolism; AMP biosynthesis via salvage pathway; AMP from ADP: step 1/1. Catalyzes the reversible transfer of the terminal phosphate group between ATP and AMP. Plays an important role in cellular energy homeostasis and in adenine nucleotide metabolism. The sequence is that of Adenylate kinase from Citrifermentans bemidjiense (strain ATCC BAA-1014 / DSM 16622 / JCM 12645 / Bem) (Geobacter bemidjiensis).